The primary structure comprises 450 residues: Phosphoglucosamine mutase (450 aa).

The active-site Phosphoserine intermediate is Ser-101. Residues Ser-101, Asp-242, Asp-244, and Asp-246 each coordinate Mg(2+). At Ser-101 the chain carries Phosphoserine.

Belongs to the phosphohexose mutase family. It depends on Mg(2+) as a cofactor. In terms of processing, activated by phosphorylation.

The catalysed reaction is alpha-D-glucosamine 1-phosphate = D-glucosamine 6-phosphate. In terms of biological role, catalyzes the conversion of glucosamine-6-phosphate to glucosamine-1-phosphate. The chain is Phosphoglucosamine mutase from Rhodopseudomonas palustris (strain HaA2).